We begin with the raw amino-acid sequence, 323 residues long: Sphingolipid delta(4)-desaturase DES1 (323 aa).

Residue Gly2 is the site of N-myristoyl glycine attachment. Transmembrane regions (helical) follow at residues 41–61 and 68–88; these read HNLIWIVAMMLLVQLASFYLV and WVIFWSYVFGSCLNHSMTLAI. Residues 89 to 93 carry the Histidine box-1 motif; it reads HEISH. Residues 104–124 form a helical membrane-spanning segment; that stretch reads WNRWFGMFANLSLGVPYSISF. Positions 128-132 match the Histidine box-2 motif; that stretch reads HMDHH. Helical transmembrane passes span 152-172, 184-204, and 209-229; these read FFCTTFRKFVWVILQPLFYAF, YLEIINTVIQITFDIIIYYVF, and LVYMLAATLLGLGLHPISGHF. The short motif at 259–263 is the Histidine box-3 element; sequence HNEHH. Ser307 carries the phosphoserine modification.

The protein belongs to the fatty acid desaturase type 1 family. DEGS subfamily. In terms of assembly, interacts with RLBP1; the interaction increases synthesis of chromophore-precursors by DEGS1. In terms of processing, myristoylation can target the enzyme to the mitochondria leading to an increase in ceramide levels. In terms of tissue distribution, detected in testis. Detected in pachytene spermatocytes and round spermatids. Expressed in retina and retinal pigment epithelium by Mueller cells (at protein level).

It localises to the mitochondrion membrane. The protein resides in the endoplasmic reticulum membrane. The enzyme catalyses an N-acylsphinganine + 2 Fe(II)-[cytochrome b5] + O2 + 2 H(+) = an N-acylsphing-4-enine + 2 Fe(III)-[cytochrome b5] + 2 H2O. It catalyses the reaction all-trans-retinol = 11-cis-retinol. It carries out the reaction all-trans-retinol = 9-cis-retinol. The catalysed reaction is all-trans-retinol = 13-cis-retinol. The enzyme catalyses 11-cis-retinol = 13-cis-retinol. It catalyses the reaction 11-cis-retinol = 9-cis-retinol. Functionally, has sphingolipid-delta-4-desaturase activity. Converts D-erythro-sphinganine to D-erythro-sphingosine (E-sphing-4-enine). Catalyzes the equilibrium isomerization of retinols. In Mus musculus (Mouse), this protein is Sphingolipid delta(4)-desaturase DES1.